A 241-amino-acid chain; its full sequence is Urease accessory protein UreF 1 (241 aa).

This sequence belongs to the UreF family. In terms of assembly, ureD, UreF and UreG form a complex that acts as a GTP-hydrolysis-dependent molecular chaperone, activating the urease apoprotein by helping to assemble the nickel containing metallocenter of UreC. The UreE protein probably delivers the nickel.

The protein resides in the cytoplasm. Functionally, required for maturation of urease via the functional incorporation of the urease nickel metallocenter. The sequence is that of Urease accessory protein UreF 1 from Brucella melitensis biotype 1 (strain ATCC 23456 / CCUG 17765 / NCTC 10094 / 16M).